The sequence spans 748 residues: Cysteine--tRNA ligase, cytoplasmic (748 aa).

The disordered stretch occupies residues 1–25; the sequence is MAAAPAEQGKGKRVQPPWSPPEGTK. Residue Cys-55 participates in Zn(2+) binding. Gly-56 contacts L-cysteine. Residues 57–67 carry the 'HIGH' region motif; sequence PTVYDASHMGH. Residue Thr-96 participates in L-cysteine binding. The 'KIIK' region motif lies at 101-104; sequence KIIK. Cys-348, His-373, and Glu-377 together coordinate Zn(2+). An L-cysteine-binding site is contributed by His-373. A 'KMSKS' region motif is present at residues 406–410; sequence KMSKS. An ATP-binding site is contributed by Lys-409. Basic and acidic residues-rich tracts occupy residues 656 to 679 and 686 to 717; these read KIEE…EAAK and PPHE…KELS. Residues 656 to 719 form a disordered region; it reads KIEEEKKRKK…DTEGKELSKG (64 aa).

The protein belongs to the class-I aminoacyl-tRNA synthetase family. In terms of assembly, homodimer. It depends on Zn(2+) as a cofactor.

It is found in the cytoplasm. The enzyme catalyses tRNA(Cys) + L-cysteine + ATP = L-cysteinyl-tRNA(Cys) + AMP + diphosphate. Functionally, catalyzes the ATP-dependent ligation of cysteine to tRNA(Cys). This is Cysteine--tRNA ligase, cytoplasmic (CARS1) from Gallus gallus (Chicken).